The sequence spans 199 residues: Probable thymidylate kinase (199 aa).

Position 9–16 (9–16 (GIDGCGKT)) interacts with ATP.

This sequence belongs to the thymidylate kinase family.

The catalysed reaction is dTMP + ATP = dTDP + ADP. The protein is Probable thymidylate kinase of Methanococcus maripaludis (strain DSM 14266 / JCM 13030 / NBRC 101832 / S2 / LL).